Consider the following 316-residue polypeptide: Large ribosomal subunit protein uL10 (316 aa).

A disordered region spans residues 282–316 (ASAAKADEPKKEEAKKVEEEEEEEEDGFMGFGMFD). The segment covering 286–299 (KADEPKKEEAKKVE) has biased composition (basic and acidic residues).

This sequence belongs to the universal ribosomal protein uL10 family. As to quaternary structure, P0 forms a pentameric complex by interaction with dimers of P1 and P2. In terms of processing, phosphorylated.

Its function is as follows. Ribosomal protein P0 is the functional equivalent of E.coli protein L10. The protein is Large ribosomal subunit protein uL10 (RPLP0) of Plasmodium falciparum (isolate 7G8).